A 256-amino-acid polypeptide reads, in one-letter code: Hemin import ATP-binding protein HmuV (256 aa).

In terms of domain architecture, ABC transporter spans 2-239 (IHAFAVSVIR…ANVREVYQVD (238 aa)). 34–41 (GPNGAGKS) provides a ligand contact to ATP.

This sequence belongs to the ABC transporter superfamily. Heme (hemin) importer (TC 3.A.1.14.5) family. In terms of assembly, the complex is composed of two ATP-binding proteins (HmuV), two transmembrane proteins (HmuU) and a solute-binding protein (HmuT).

The protein localises to the cell inner membrane. Part of the ABC transporter complex HmuTUV involved in hemin import. Responsible for energy coupling to the transport system. The protein is Hemin import ATP-binding protein HmuV of Hahella chejuensis (strain KCTC 2396).